The following is a 274-amino-acid chain: Pyrroline-5-carboxylate reductase 3 (274 aa).

N-acetylalanine is present on Ala2.

It belongs to the pyrroline-5-carboxylate reductase family. As to quaternary structure, homodecamer; composed of 5 homodimers.

It localises to the cytoplasm. The enzyme catalyses L-proline + NADP(+) = (S)-1-pyrroline-5-carboxylate + NADPH + 2 H(+). It catalyses the reaction L-proline + NAD(+) = (S)-1-pyrroline-5-carboxylate + NADH + 2 H(+). The protein operates within amino-acid biosynthesis; L-proline biosynthesis; L-proline from L-glutamate 5-semialdehyde: step 1/1. In terms of biological role, oxidoreductase that catalyzes the last step in proline biosynthesis, which corresponds to the reduction of pyrroline-5-carboxylate (P5C) to L-proline using NAD(P)H. Proline is synthesized from either glutamate or ornithine; both are converted to P5C, and then to proline via pyrroline-5-carboxylate reductases (PYCRs). PYCR3 is exclusively linked to the biosynthesis of proline from ornithine. This is Pyrroline-5-carboxylate reductase 3 from Macaca fascicularis (Crab-eating macaque).